Consider the following 245-residue polypeptide: NADH-quinone oxidoreductase subunit C (245 aa).

Over residues 1-10 (MNAPQDRTDD) the composition is skewed to basic and acidic residues. Disordered regions lie at residues 1-54 (MNAP…GYGG) and 217-245 (QRKD…RSYQ). The span at 11–28 (GGVPVPVTPAGATGGAPA) shows a compositional bias: low complexity. The segment covering 39-54 (GMFGDQGTGDVSGYGG) has biased composition (gly residues).

This sequence belongs to the complex I 30 kDa subunit family. As to quaternary structure, NDH-1 is composed of 14 different subunits. Subunits NuoB, C, D, E, F, and G constitute the peripheral sector of the complex.

It is found in the cell membrane. The catalysed reaction is a quinone + NADH + 5 H(+)(in) = a quinol + NAD(+) + 4 H(+)(out). In terms of biological role, NDH-1 shuttles electrons from NADH, via FMN and iron-sulfur (Fe-S) centers, to quinones in the respiratory chain. The immediate electron acceptor for the enzyme in this species is believed to be a menaquinone. Couples the redox reaction to proton translocation (for every two electrons transferred, four hydrogen ions are translocated across the cytoplasmic membrane), and thus conserves the redox energy in a proton gradient. The protein is NADH-quinone oxidoreductase subunit C of Salinispora arenicola (strain CNS-205).